We begin with the raw amino-acid sequence, 295 residues long: MSGALDVLQMKEEDVLKFLAAGTHLGGTNLDFQMEQYIYKRKSDGIYIINLKRTWEKLLLAARAIVAIENPADVSVISSRNTGQRAVLKFAAATGATPIAGRFTPGTFTNQIQAAFREPRLLVVTDPRADHQPLTEASYVNLPTIALCNTDSPLRYVDIAIPCNNKGAHSVGLMWWMLAREVLRMRGTISREHPWEVMPDLYFYRDPEEIEKEEQAAAEKAVTKEEFQGEWTAPAPEFTATQPEVADWSEGVQVPSVPIQQFPTEDWSAQPATEDWSAAPTAQATEWVGATTEWS.

Ser-2 carries the post-translational modification N-acetylserine. A Phosphoserine modification is found at Ser-43. Position 52 is an N6-acetyllysine (Lys-52). The tract at residues 54–113 is interaction with PPP1R16B; sequence TWEKLLLAARAIVAIENPADVSVISSRNTGQRAVLKFAAATGATPIAGRFTPGTFTNQIQ. Lys-89 bears the N6-acetyllysine; alternate mark. A Glycyl lysine isopeptide (Lys-Gly) (interchain with G-Cter in SUMO2); alternate cross-link involves residue Lys-89. At Thr-97 the chain carries Phosphothreonine. 2 laminin-binding regions span residues 161-180 and 205-229; these read IPCNNKGAHSVGLMWWMLAR and RDPEEIEKEEQAAAEKAVTKEEFQG. [DE]-W-[ST] repeat units follow at residues 230–232, 247–249, 266–268, 275–277, and 293–295; these read EWT, DWS, and EWS. Residues 242 to 295 form a laminin-binding region; that stretch reads QPEVADWSEGVQVPSVPIQQFPTEDWSAQPATEDWSAAPTAQATEWVGATTEWS. Positions 266 to 295 are disordered; that stretch reads DWSAQPATEDWSAAPTAQATEWVGATTEWS.

The protein belongs to the universal ribosomal protein uS2 family. In terms of assembly, monomer (37LRP) and homodimer (67LR). Component of the small ribosomal subunit. Mature ribosomes consist of a small (40S) and a large (60S) subunit. The 40S subunit contains about 33 different proteins and 1 molecule of RNA (18S). The 60S subunit contains about 49 different proteins and 3 molecules of RNA (28S, 5.8S and 5S). Interacts with RPS21. Interacts with several laminins including at least LAMB1. Interacts with MDK. The mature dimeric form interacts with PPP1R16B (via its fourth ankyrin repeat). Interacts with PPP1CA only in the presence of PPP1R16B. Acylated. Acylation may be a prerequisite for conversion of the monomeric 37 kDa laminin receptor precursor (37LRP) to the mature dimeric 67 kDa laminin receptor (67LR), and may provide a mechanism for membrane association. In terms of processing, cleaved by stromelysin-3 (ST3) at the cell surface. Cleavage by stromelysin-3 may be a mechanism to alter cell-extracellular matrix interactions.

It is found in the cell membrane. The protein localises to the cytoplasm. Its subcellular location is the nucleus. Functionally, required for the assembly and/or stability of the 40S ribosomal subunit. Required for the processing of the 20S rRNA-precursor to mature 18S rRNA in a late step of the maturation of 40S ribosomal subunits. Also functions as a cell surface receptor for laminin. Plays a role in cell adhesion to the basement membrane and in the consequent activation of signaling transduction pathways. May play a role in cell fate determination and tissue morphogenesis. Also acts as a receptor for several other ligands, including the pathogenic prion protein, viruses, and bacteria. Acts as a PPP1R16B-dependent substrate of PPP1CA. The polypeptide is Small ribosomal subunit protein uS2 (Chlorocebus aethiops (Green monkey)).